Here is a 439-residue protein sequence, read N- to C-terminus: Dolichyl-diphosphooligosaccharide--protein glycosyltransferase 48 kDa subunit (439 aa).

The N-terminal stretch at 1–26 (MEPSTAARAWALFWLLPPLLGAVCAS) is a signal peptide. Residues 27–410 (GPRTLVLLDN…YERFIPSAYP (384 aa)) are Lumenal-facing. The helical transmembrane segment at 411 to 430 (YYASAFSMMLGLFIFSIVFL) threads the bilayer. Residues 431–439 (HMKEKEKSD) are Cytoplasmic-facing.

The protein belongs to the DDOST 48 kDa subunit family. Component of the oligosaccharyltransferase (OST) complex. OST exists in two different complex forms which contain common core subunits RPN1, RPN2, OST48, OST4, DAD1 and TMEM258, either STT3A or STT3B as catalytic subunits, and form-specific accessory subunits. STT3A complex assembly occurs through the formation of 3 subcomplexes. Subcomplex 1 contains RPN1 and TMEM258, subcomplex 2 contains the STT3A-specific subunits STT3A, DC2/OSTC, and KCP2 as well as the core subunit OST4, and subcomplex 3 contains RPN2, DAD1, and OST48. The STT3A complex can form stable complexes with the Sec61 complex or with both the Sec61 and TRAP complexes. Interacts with SMIM22.

Its subcellular location is the endoplasmic reticulum membrane. It functions in the pathway protein modification; protein glycosylation. Subunit of the oligosaccharyl transferase (OST) complex that catalyzes the initial transfer of a defined glycan (Glc(3)Man(9)GlcNAc(2) in eukaryotes) from the lipid carrier dolichol-pyrophosphate to an asparagine residue within an Asn-X-Ser/Thr consensus motif in nascent polypeptide chains, the first step in protein N-glycosylation. N-glycosylation occurs cotranslationally and the complex associates with the Sec61 complex at the channel-forming translocon complex that mediates protein translocation across the endoplasmic reticulum (ER). All subunits are required for a maximal enzyme activity. Required for the assembly of both SST3A- and SS3B-containing OST complexes. This chain is Dolichyl-diphosphooligosaccharide--protein glycosyltransferase 48 kDa subunit, found in Pongo abelii (Sumatran orangutan).